The primary structure comprises 1187 residues: ATP-dependent DNA helicase MER3 (1187 aa).

Residues 1–41 form a disordered region; the sequence is MKTKFDRLGTGKRSRPSPNNIDFNDQSATFKRNKKNSRQPS. The span at 16–30 shows a compositional bias: polar residues; the sequence is PSPNNIDFNDQSATF. A Helicase ATP-binding domain is found at 148 to 322; sequence PSIYESNENC…WLKTNNELPA (175 aa). 161 to 168 is a binding site for ATP; it reads SPTGSGKT. Positions 268–271 match the DEIH box motif; sequence DEIH. The Helicase C-terminal domain maps to 360–542; it reads KLIEIIEKHA…NLIEHLAAET (183 aa). The 307-residue stretch at 616 to 922 folds into the SEC63 domain; it reads STAYGNAMTR…PKLEKIEFSI (307 aa). A C4-type zinc finger spans residues 1039 to 1054; the sequence is CFHSCKDKTQCRHLCC. The disordered stretch occupies residues 1146–1187; that stretch reads NCPEIIPIDLESSDSYSSNTAASSISDPNGDLDFLGSDIEFE. The segment covering 1158 to 1171 has biased composition (low complexity); it reads SDSYSSNTAASSIS.

It belongs to the helicase family. SKI2 subfamily. In terms of assembly, oligomerizes. Requires a divalent metal cation as cofactor. Zn(2+) serves as cofactor.

It localises to the nucleus. The catalysed reaction is Couples ATP hydrolysis with the unwinding of duplex DNA by translocating in the 3'-5' direction.. The enzyme catalyses ATP + H2O = ADP + phosphate + H(+). Functionally, DNA-dependent ATPase and 3'-5' DNA helicase. Required in the control of double strand break transition and crossover during meiosis. ATPase is slightly better stimulated by single-stranded (ss) than double-stranded (ds)DNA. Unwinds Holliday junction (HJ) DNA to Y-DNA and to ssDNA. Efficient unwinding requires 6 nucleotides of 3'-ssDNA; seems to initiate unwinding from blunt ends when they open slightly. Binds HJ, dsDNA, ssDNA and 3'- and 5-overhang DNA. This chain is ATP-dependent DNA helicase MER3, found in Saccharomyces cerevisiae (strain ATCC 204508 / S288c) (Baker's yeast).